A 469-amino-acid chain; its full sequence is Ribulose bisphosphate carboxylase large chain (469 aa).

Residue Lys5 is modified to N6,N6,N6-trimethyllysine. Asn114 and Thr164 together coordinate substrate. Lys166 (proton acceptor) is an active-site residue. Lys168 contacts substrate. Mg(2+) contacts are provided by Lys192, Asp194, and Glu195. The residue at position 192 (Lys192) is an N6-carboxylysine. Residue His285 is the Proton acceptor of the active site. Residues Arg286, His318, and Ser370 each contribute to the substrate site.

This sequence belongs to the RuBisCO large chain family. Type I subfamily. Heterohexadecamer of 8 large chains and 8 small chains; disulfide-linked. The disulfide link is formed within the large subunit homodimers. Mg(2+) is required as a cofactor. The disulfide bond which can form in the large chain dimeric partners within the hexadecamer appears to be associated with oxidative stress and protein turnover.

The protein resides in the plastid. It is found in the chloroplast. The catalysed reaction is 2 (2R)-3-phosphoglycerate + 2 H(+) = D-ribulose 1,5-bisphosphate + CO2 + H2O. The enzyme catalyses D-ribulose 1,5-bisphosphate + O2 = 2-phosphoglycolate + (2R)-3-phosphoglycerate + 2 H(+). In terms of biological role, ruBisCO catalyzes two reactions: the carboxylation of D-ribulose 1,5-bisphosphate, the primary event in carbon dioxide fixation, as well as the oxidative fragmentation of the pentose substrate in the photorespiration process. Both reactions occur simultaneously and in competition at the same active site. The chain is Ribulose bisphosphate carboxylase large chain from Antirhea lucida (Palo iloron).